The primary structure comprises 424 residues: UDP-N-acetylglucosamine 1-carboxyvinyltransferase (424 aa).

22 to 23 (KN) contributes to the phosphoenolpyruvate binding site. Residue Arg-93 coordinates UDP-N-acetyl-alpha-D-glucosamine. Residue Cys-117 is the Proton donor of the active site. Residue Cys-117 is modified to 2-(S-cysteinyl)pyruvic acid O-phosphothioketal. UDP-N-acetyl-alpha-D-glucosamine-binding positions include 122–126 (RPIDL), Asp-307, and Ile-329.

It belongs to the EPSP synthase family. MurA subfamily.

It localises to the cytoplasm. It carries out the reaction phosphoenolpyruvate + UDP-N-acetyl-alpha-D-glucosamine = UDP-N-acetyl-3-O-(1-carboxyvinyl)-alpha-D-glucosamine + phosphate. It functions in the pathway cell wall biogenesis; peptidoglycan biosynthesis. Its function is as follows. Cell wall formation. Adds enolpyruvyl to UDP-N-acetylglucosamine. This Chlorobium phaeovibrioides (strain DSM 265 / 1930) (Prosthecochloris vibrioformis (strain DSM 265)) protein is UDP-N-acetylglucosamine 1-carboxyvinyltransferase.